The sequence spans 209 residues: Uracil phosphoribosyltransferase (209 aa).

5-phospho-alpha-D-ribose 1-diphosphate is bound by residues Arg-79, Arg-104, and 131–139 (DPMLATGAS). Residues Ile-194 and 199-201 (GDA) each bind uracil. Asp-200 is a binding site for 5-phospho-alpha-D-ribose 1-diphosphate.

It belongs to the UPRTase family. It depends on Mg(2+) as a cofactor.

The catalysed reaction is UMP + diphosphate = 5-phospho-alpha-D-ribose 1-diphosphate + uracil. It participates in pyrimidine metabolism; UMP biosynthesis via salvage pathway; UMP from uracil: step 1/1. Allosterically activated by GTP. In terms of biological role, catalyzes the conversion of uracil and 5-phospho-alpha-D-ribose 1-diphosphate (PRPP) to UMP and diphosphate. The chain is Uracil phosphoribosyltransferase from Staphylococcus saprophyticus subsp. saprophyticus (strain ATCC 15305 / DSM 20229 / NCIMB 8711 / NCTC 7292 / S-41).